The primary structure comprises 187 residues: ATP synthase subunit b (187 aa).

Residues 31–51 (VAIMGLAIFVLFLILSYLLFN) traverse the membrane as a helical segment.

The protein belongs to the ATPase B chain family. F-type ATPases have 2 components, F(1) - the catalytic core - and F(0) - the membrane proton channel. F(1) has five subunits: alpha(3), beta(3), gamma(1), delta(1), epsilon(1). F(0) has three main subunits: a(1), b(2) and c(10-14). The alpha and beta chains form an alternating ring which encloses part of the gamma chain. F(1) is attached to F(0) by a central stalk formed by the gamma and epsilon chains, while a peripheral stalk is formed by the delta and b chains.

Its subcellular location is the cell membrane. In terms of biological role, f(1)F(0) ATP synthase produces ATP from ADP in the presence of a proton or sodium gradient. F-type ATPases consist of two structural domains, F(1) containing the extramembraneous catalytic core and F(0) containing the membrane proton channel, linked together by a central stalk and a peripheral stalk. During catalysis, ATP synthesis in the catalytic domain of F(1) is coupled via a rotary mechanism of the central stalk subunits to proton translocation. Its function is as follows. Component of the F(0) channel, it forms part of the peripheral stalk, linking F(1) to F(0). The chain is ATP synthase subunit b from Lachnoclostridium phytofermentans (strain ATCC 700394 / DSM 18823 / ISDg) (Clostridium phytofermentans).